We begin with the raw amino-acid sequence, 392 residues long: O-phospho-L-seryl-tRNA:Cys-tRNA synthase 1 (392 aa).

Residues A85 to R86, N190, and S213 to H215 contribute to the pyridoxal 5'-phosphate site. An N6-(pyridoxal phosphate)lysine modification is found at K216.

The protein belongs to the SepCysS family. As to quaternary structure, homodimer. Interacts with SepRS. Pyridoxal 5'-phosphate serves as cofactor.

It catalyses the reaction O-phospho-L-seryl-tRNA(Cys) + hydrogen sulfide + H(+) = L-cysteinyl-tRNA(Cys) + phosphate. Converts O-phospho-L-seryl-tRNA(Cys) (Sep-tRNA(Cys)) to L-cysteinyl-tRNA(Cys) (Cys-tRNA(Cys)). This Methanocorpusculum labreanum (strain ATCC 43576 / DSM 4855 / Z) protein is O-phospho-L-seryl-tRNA:Cys-tRNA synthase 1.